The chain runs to 147 residues: Ubiquitin-conjugating enzyme E2 5A (147 aa).

Residues 1–15 (MASKRIQKELKDLQK) are compositionally biased toward basic and acidic residues. Residues 1 to 24 (MASKRIQKELKDLQKDPPTSCSAG) are disordered. One can recognise a UBC core domain in the interval 1–147 (MASKRIQKEL…ARTWTQRYAM (147 aa)). Catalysis depends on C85, which acts as the Glycyl thioester intermediate.

The protein belongs to the ubiquitin-conjugating enzyme family.

It carries out the reaction S-ubiquitinyl-[E1 ubiquitin-activating enzyme]-L-cysteine + [E2 ubiquitin-conjugating enzyme]-L-cysteine = [E1 ubiquitin-activating enzyme]-L-cysteine + S-ubiquitinyl-[E2 ubiquitin-conjugating enzyme]-L-cysteine.. It participates in protein modification; protein ubiquitination. Functionally, E2 conjugating enzyme that associates with the E3 ubiquitin-protein ligase EL5 to mediate ubiquitination of target proteins. In Oryza sativa subsp. japonica (Rice), this protein is Ubiquitin-conjugating enzyme E2 5A (UBC5A).